A 980-amino-acid polypeptide reads, in one-letter code: Chitin binding domain containing chtb-2 (980 aa).

Positions 1–20 (MRTMHCFLFILLFCLGQVFT) are cleaved as a signal peptide. Asn-187 and Asn-190 each carry an N-linked (GlcNAc...) asparagine glycan. Disordered stretches follow at residues 310–354 (ERQQ…AELD), 431–451 (QEEE…QIRQ), and 486–512 (EILR…QQEA). 2 N-linked (GlcNAc...) asparagine glycosylation sites follow: Asn-941 and Asn-975.

The protein is Chitin binding domain containing chtb-2 of Caenorhabditis elegans.